The primary structure comprises 192 residues: Probable nicotinate-nucleotide adenylyltransferase (192 aa).

This sequence belongs to the NadD family.

The catalysed reaction is nicotinate beta-D-ribonucleotide + ATP + H(+) = deamido-NAD(+) + diphosphate. It functions in the pathway cofactor biosynthesis; NAD(+) biosynthesis; deamido-NAD(+) from nicotinate D-ribonucleotide: step 1/1. In terms of biological role, catalyzes the reversible adenylation of nicotinate mononucleotide (NaMN) to nicotinic acid adenine dinucleotide (NaAD). The sequence is that of Probable nicotinate-nucleotide adenylyltransferase from Rhizobium leguminosarum bv. trifolii (strain WSM2304).